Consider the following 416-residue polypeptide: (S)-ureidoglycine--glyoxylate transaminase (416 aa).

Lys198 is subject to N6-(pyridoxal phosphate)lysine.

This sequence belongs to the class-V pyridoxal-phosphate-dependent aminotransferase family. As to quaternary structure, homodimer. The cofactor is pyridoxal 5'-phosphate.

It catalyses the reaction (S)-2-ureidoglycine + glyoxylate = N-carbamoyl-2-oxoglycine + glycine. It participates in nitrogen metabolism; (S)-allantoin degradation. In terms of biological role, catalyzes the transamination between an unstable intermediate ((S)-ureidoglycine) and the end product of purine catabolism (glyoxylate) to yield oxalurate and glycine. Glyoxylate is the preferred substrate, but other amino-group acceptors can be used. This is (S)-ureidoglycine--glyoxylate transaminase from Bacillus subtilis (strain 168).